A 241-amino-acid chain; its full sequence is Carboxy-S-adenosyl-L-methionine synthase (241 aa).

Residues Tyr38, 63–65, 88–89, 116–117, Asn131, and Arg198 each bind S-adenosyl-L-methionine; these read GCS, DN, and DI.

The protein belongs to the class I-like SAM-binding methyltransferase superfamily. Cx-SAM synthase family. As to quaternary structure, homodimer.

The enzyme catalyses prephenate + S-adenosyl-L-methionine = carboxy-S-adenosyl-L-methionine + 3-phenylpyruvate + H2O. Its function is as follows. Catalyzes the conversion of S-adenosyl-L-methionine (SAM) to carboxy-S-adenosyl-L-methionine (Cx-SAM). The protein is Carboxy-S-adenosyl-L-methionine synthase of Histophilus somni (strain 2336) (Haemophilus somnus).